The primary structure comprises 264 residues: 3-methyl-2-oxobutanoate hydroxymethyltransferase (264 aa).

Mg(2+)-binding residues include Asp-45 and Asp-84. 3-methyl-2-oxobutanoate is bound by residues Asp-45 to Ser-46, Asp-84, and Lys-112. Glu-114 contributes to the Mg(2+) binding site. Glu-181 acts as the Proton acceptor in catalysis.

It belongs to the PanB family. As to quaternary structure, homodecamer; pentamer of dimers. Mg(2+) is required as a cofactor.

It is found in the cytoplasm. It carries out the reaction 3-methyl-2-oxobutanoate + (6R)-5,10-methylene-5,6,7,8-tetrahydrofolate + H2O = 2-dehydropantoate + (6S)-5,6,7,8-tetrahydrofolate. The protein operates within cofactor biosynthesis; (R)-pantothenate biosynthesis; (R)-pantoate from 3-methyl-2-oxobutanoate: step 1/2. In terms of biological role, catalyzes the reversible reaction in which hydroxymethyl group from 5,10-methylenetetrahydrofolate is transferred onto alpha-ketoisovalerate to form ketopantoate. The protein is 3-methyl-2-oxobutanoate hydroxymethyltransferase of Tolumonas auensis (strain DSM 9187 / NBRC 110442 / TA 4).